The following is a 329-amino-acid chain: Fructose-1,6-bisphosphatase class 1 (329 aa).

4 residues coordinate Mg(2+): glutamate 84, aspartate 103, leucine 105, and aspartate 106. Substrate-binding positions include 106-109, asparagine 196, and lysine 262; that span reads DGSS. Residue glutamate 268 coordinates Mg(2+).

This sequence belongs to the FBPase class 1 family. As to quaternary structure, homotetramer. Mg(2+) serves as cofactor.

It is found in the cytoplasm. The enzyme catalyses beta-D-fructose 1,6-bisphosphate + H2O = beta-D-fructose 6-phosphate + phosphate. It functions in the pathway carbohydrate biosynthesis; gluconeogenesis. This is Fructose-1,6-bisphosphatase class 1 from Shewanella loihica (strain ATCC BAA-1088 / PV-4).